The sequence spans 166 residues: MYYPAVQVLIGIILVDNFNTEFLSSEKKNCKTDTDCKDKGHHCVRGTCTDISCLEAVKQDIKDINLDPSIRSCNYTPDFYTFNSTTADLQSPFGKTRIDYGSIYTSDWSSIDHCQSLCCKHNDCIGWEFDKIESSHGGECYFYTNPHPALKNSNDTTIMGIARNIL.

Position 1 (Met-1) is a topological domain, intravirion. The helical transmembrane segment at 2–22 (YYPAVQVLIGIILVDNFNTEF) threads the bilayer. Residues 23 to 166 (LSSEKKNCKT…TIMGIARNIL (144 aa)) are Virion surface-facing.

Belongs to the asfivirus envelope protein p22 family.

The protein localises to the virion membrane. It localises to the host cell membrane. The protein is Putative membrane protein 162 of African swine fever virus (isolate Tick/Malawi/Lil 20-1/1983) (ASFV).